Reading from the N-terminus, the 421-residue chain is F-box only protein 5 (421 aa).

The residue at position 85 (S85) is a Phosphoserine. The segment at 114–219 (ELEASRLYED…IGKKMGLEHL (106 aa)) is interaction with EVI5. The F-box domain maps to 223–273 (AELSRRGFVHLLANILTKLSGMDLVNLSKVSRIWKKILENNKGAFQLYSKT). The sufficient for interaction with RPS6KA2; Prevents association of CDC20 with RPS6KA2 stretch occupies residues 236 to 313 (NILTKLSGMD…KSSTWAPPKK (78 aa)). The segment at 236 to 383 (NILTKLSGMD…SCQFEYCTKC (148 aa)) is requires for efficient binding to CDC20. Residues 280-421 (SSKLSLHATT…KKSKKNLQRL (142 aa)) are inhibits APC ubiquitin ligase activity. The segment at 296 to 299 (RAAL) is competitively blocks access of APC substrates to the D-box coreceptor formed by FZR1 and ANAPC10. The ZBR-type zinc-finger motif lies at 348–396 (SLKACVRCNFPAKYDHYLERAVCKRESCQFEYCTKCLCAYHNNKDCLNG). 8 residues coordinate Zn(2+): C352, C355, C370, C375, C380, C383, H388, and C393. The segment at 352–394 (CVRCNFPAKYDHYLERAVCKRESCQFEYCTKCLCAYHNNKDCL) is allows a rapid multiple mono-ubiquitination of the APC substrate, but strongly inhibits the slow ubiquitin chain elongation catalyzed by UBCH10. The tract at residues 411 to 421 (TKKSKKNLQRL) is sufficient to suppress UBE2S activity; essential for interaction with UBE2S; competitively inhibits the rapide ubiquitin chain elongation by UBE2D1 which blocks UBE2D1 with APC; indispensable for recruitment and position of FBXO5 to the catalytic site of APC; abrogates the inhibition of ubiquitin chain assembly primarily catalyzed by UBE2S; inhibits the ubiquitination by either UBE2C or UBE2D1.

Part of a SCF (SKP1-cullin-F-box) protein ligase complex. Interacts with BTRC; mediates proteolysis by the SCF ubiquitin ligase complex leading to activation of APC in late mitosis and subsequent mitotic progression. Interacts with FZR1/CDH1 and the N-terminal substrate-binding domain of CDC20; prevents APC activation. Also interacts with EVI5 which blocks its phosphorylation by PLK1 and prevents its subsequent binding to BTRC and degradation. Interacts simultaneously with anaphase promoting complex (APC), through at least ANAPC2, CDC23, CDC27, the APC substrate GMNN and the APC activator FZR1. Interacts with UBE2S; interferes with the activity of UBE2S mainly by disrupting the dynamic electrostatic association between the C-terminal tail of UBE2S and ANAPC2. Interacts with RPS6KA2; cooperates to induce the metaphase arrest of early blastomeres; increases and stabilizes interaction of FBXO5 with CDC20. Post-translationally, phosphorylation by CDK2 and subsequently by PLK1 triggers degradation during early mitosis through ubiquitin-mediated proteolysis by the SCF ubiquitin ligase complex containing the F-box protein BTRC. This degradation is necessary for the activation of APC in late mitosis and subsequent mitotic progression. Phosphorylated by RPS6KA2; increases and stabilizes interaction with CDC20. In terms of processing, ubiquitinated by the SCF(BTRC) complex following phosphorylation by PLK1. Undergoes both 'Lys-11' and 'Lys-48'-linked polyubiquitination by APC-FZR1 complex leading to degradation during G1 phase by the proteasome. Degraded through the SCF(BTRC) complex; degradation occurs during oocyte maturation, between germinal vesicle breakdown (GVBD) and meiosis I, and is required for the meiosis I-meiosis II transition. Expressed in oocytes and granulosa cells. Expressed in proliferating cells compartments in hair follicle and skin epidermis, spermatogonia, and intestinal crypts.

It is found in the nucleus. It localises to the cytoplasm. Its subcellular location is the cytoskeleton. The protein localises to the spindle. It participates in protein modification; protein ubiquitination. Regulator of APC activity during mitotic and meiotic cell cycle. During mitotic cell cycle plays a role as both substrate and inhibitor of APC-FZR1 complex. During G1 phase, plays a role as substrate of APC-FZR1 complex E3 ligase. Then switches as an inhibitor of APC-FZR1 complex during S and G2 leading to cell-cycle commitment. As APC inhibitor, prevents the degradation of APC substrates at multiple levels: by interacting with APC and blocking access of APC substrates to the D-box co-receptor, formed by FZR1 and ANAPC10; by suppressing ubiquitin ligation and chain elongation by APC by preventing the UBE2C and UBE2S activities. Plays a role in genome integrity preservation by coordinating DNA replication with mitosis through APC inhibition in interphase to stabilize CCNA2 and GMNN in order to promote mitosis and prevent rereplication and DNA damage-induced cellular senescence. During oocyte maturation, plays a role in meiosis through inactivation of APC-FZR1 complex. Inhibits APC through RPS6KA2 interaction that increases FBXO5 affiniy for CDC20 leading to the metaphase arrest of the second meiotic division before fertilization. Controls entry into the first meiotic division through inactivation of APC-FZR1 complex. Promotes migration and osteogenic differentiation of mesenchymal stem cells. The protein is F-box only protein 5 of Mus musculus (Mouse).